Here is an 87-residue protein sequence, read N- to C-terminus: Venom serine protease inhibitor (87 aa).

The signal sequence occupies residues 1–23 (MPRLVLVSFLFLAIFSVFIGGFA). Disulfide bonds link Cys27–Cys61, Cys36–Cys57, Cys40–Cys53, Cys44–Cys81, and Cys63–Cys75. Residues 27–81 (CPRNEIFTRCHAACQPSCARLARKPFCIKICKPGCICTSGYLRNKNNVCVPRSRC) form the TIL domain.

Belongs to the serine protease inhibitor-like (TIL domain-containing) family. As to expression, specifically expressed by the venom gland.

The protein resides in the secreted. In terms of biological role, antifibrinolytic and antimicrobial serine protease inhibitor. Inhibits trypsin, plasmin and microbial serine proteases but not chymotrypsin, thrombin and elastase. Inhibits the plasmin-mediated degradation of fibrin to fibrin degradation products. Also binds to bacterial and fungal surfaces and exhibits antimicrobial activity against fungi as well as Gram-positive and Gram-negative bacteria. This is Venom serine protease inhibitor from Apis cerana (Indian honeybee).